Consider the following 158-residue polypeptide: Histone H2B.1 (158 aa).

An N6-acetyllysine mark is found at K7 and K25. Disordered regions lie at residues 26–45 and 135–158; these read AAAGKDGKAGIMTPKKPKKG and VHNFESETSKKNSQGRKRGRGQQT. Residues 135-144 are compositionally biased toward basic and acidic residues; it reads VHNFESETSK. Basic residues predominate over residues 147-158; the sequence is SQGRKRGRGQQT.

This sequence belongs to the histone H2B family. The nucleosome is a histone octamer containing two molecules each of H2A, H2B, H3 and H4 assembled in one H3-H4 heterotetramer and two H2A-H2B heterodimers. The octamer wraps approximately 147 bp of DNA. In terms of processing, can be acetylated to form H2BK6ac and H2BK33ac. In terms of tissue distribution, expressed in the generative cell within the bicellular pollen. Not detected in other reproductive or vegetative tissues.

It localises to the nucleus. The protein localises to the chromosome. Its function is as follows. Core component of nucleosome. Nucleosomes wrap and compact DNA into chromatin, limiting DNA accessibility to the cellular machineries which require DNA as a template. Histones thereby play a central role in transcription regulation, DNA repair, DNA replication and chromosomal stability. DNA accessibility is regulated via a complex set of post-translational modifications of histones, also called histone code, and nucleosome remodeling. This is Histone H2B.1 from Lilium longiflorum (Trumpet lily).